We begin with the raw amino-acid sequence, 235 residues long: Purine nucleoside phosphorylase DeoD-type (235 aa).

Residue H4 coordinates a purine D-ribonucleoside. Residues G20, R24, R43, and 87-90 (RVGT) each bind phosphate. A purine D-ribonucleoside-binding positions include E162, 179–181 (EME), and 203–204 (SD). D204 functions as the Proton donor in the catalytic mechanism.

Belongs to the PNP/UDP phosphorylase family. Homohexamer; trimer of homodimers.

It carries out the reaction a purine D-ribonucleoside + phosphate = a purine nucleobase + alpha-D-ribose 1-phosphate. The enzyme catalyses a purine 2'-deoxy-D-ribonucleoside + phosphate = a purine nucleobase + 2-deoxy-alpha-D-ribose 1-phosphate. Catalyzes the reversible phosphorolytic breakdown of the N-glycosidic bond in the beta-(deoxy)ribonucleoside molecules, with the formation of the corresponding free purine bases and pentose-1-phosphate. In Bacillus anthracis (strain CDC 684 / NRRL 3495), this protein is Purine nucleoside phosphorylase DeoD-type.